Consider the following 157-residue polypeptide: Transcription elongation factor GreA (157 aa).

The stretch at 46-67 (AEYHAARERQSFIEGRIKELED) forms a coiled coil.

The protein belongs to the GreA/GreB family.

Its function is as follows. Necessary for efficient RNA polymerase transcription elongation past template-encoded arresting sites. The arresting sites in DNA have the property of trapping a certain fraction of elongating RNA polymerases that pass through, resulting in locked ternary complexes. Cleavage of the nascent transcript by cleavage factors such as GreA or GreB allows the resumption of elongation from the new 3'terminus. GreA releases sequences of 2 to 3 nucleotides. This chain is Transcription elongation factor GreA, found in Rhodospirillum rubrum (strain ATCC 11170 / ATH 1.1.1 / DSM 467 / LMG 4362 / NCIMB 8255 / S1).